Reading from the N-terminus, the 312-residue chain is MKKIFLAGLAAGFQTTWTLGKVIFPVTLLVTLLQHTPVMDWLVRLITPVMGLFGLSGEAAIPLVLGNMLNLYAGIAGILTLDLSVKEVFILAVMLSFCHNLIIESTVAAKVGIRIGVILAVRIGLAAVSAIVINLIWHGGKETAQYGFIAAKSAAPDSWLGMLAEALTKAGLGVLQLAAIVIPLMIIIQFLRDLGWLYRFSRWLSPFTQLLGMNKNTSMTMVTGLTIGLAYGAGVMIKAVEDDGVSKRDMTLAFIFLVACHAVVEDTLVFIPLGIPVWPLLLIRVTTAVLLTMAIAHTWKKWKPSAVGKEAI.

8 helical membrane-spanning segments follow: residues Ile4–Phe24, Leu45–Leu65, Ile75–Leu95, Val117–Trp137, Gly171–Leu191, Thr217–Ile237, Ala253–Ile275, and Leu280–Trp299.

The protein localises to the cell membrane. This is an uncharacterized protein from Bacillus subtilis (strain 168).